The chain runs to 426 residues: Putative FBD-associated F-box protein At5g53635 (426 aa).

The 45-residue stretch at 1–45 folds into the F-box domain; that stretch reads MISQLPDPLICHILSHLPIKDLVTTRVLSTRWRSLWLWLPCLELN. The FBD domain maps to 353-405; sequence MIQFGSSLVPECLLSSLEFVDIRIPFRGHLEVMKLVRYFLENSAILKKLSLDH.

This chain is Putative FBD-associated F-box protein At5g53635, found in Arabidopsis thaliana (Mouse-ear cress).